A 647-amino-acid polypeptide reads, in one-letter code: Bifunctional enzyme CysN/CysC (647 aa).

A sulfate adenylyltransferase region spans residues 1–472 (MSHQSDLIAT…TEERAARFGQ (472 aa)). The tr-type G domain maps to 22–239 (KQLLRFITCG…LETVYIGSDR (218 aa)). The G1 stretch occupies residues 31-38 (GSVDDGKS). 31–38 (GSVDDGKS) contributes to the GTP binding site. The tract at residues 89-93 (GITID) is G2. The tract at residues 110 to 113 (DTPG) is G3. Residues 110–114 (DTPGH) and 165–168 (NKMD) each bind GTP. Residues 165-168 (NKMD) are G4. The interval 204 to 206 (SAL) is G5. An adenylyl-sulfate kinase region spans residues 473–614 (KPATVLLTGL…FPGVTAKYDV (142 aa)). 481–488 (GLTGSGKT) provides a ligand contact to ATP.

It in the C-terminal section; belongs to the APS kinase family. The protein in the N-terminal section; belongs to the TRAFAC class translation factor GTPase superfamily. Classic translation factor GTPase family. CysN/NodQ subfamily. In terms of assembly, heterodimer composed of CysD, the smaller subunit, and CysNC.

The enzyme catalyses sulfate + ATP + H(+) = adenosine 5'-phosphosulfate + diphosphate. It carries out the reaction adenosine 5'-phosphosulfate + ATP = 3'-phosphoadenylyl sulfate + ADP + H(+). The protein operates within sulfur metabolism; hydrogen sulfide biosynthesis; sulfite from sulfate: step 1/3. Its pathway is sulfur metabolism; hydrogen sulfide biosynthesis; sulfite from sulfate: step 2/3. Its function is as follows. With CysD forms the ATP sulfurylase (ATPS) that catalyzes the adenylation of sulfate producing adenosine 5'-phosphosulfate (APS) and diphosphate, the first enzymatic step in sulfur assimilation pathway. APS synthesis involves the formation of a high-energy phosphoric-sulfuric acid anhydride bond driven by GTP hydrolysis by CysN coupled to ATP hydrolysis by CysD. Functionally, APS kinase catalyzes the synthesis of activated sulfate. This chain is Bifunctional enzyme CysN/CysC (cysNC), found in Rhodopirellula baltica (strain DSM 10527 / NCIMB 13988 / SH1).